Consider the following 363-residue polypeptide: 3-dehydroquinate synthase (363 aa).

NAD(+) contacts are provided by residues 72 to 77 (SGEKEK), 130 to 131 (TT), K142, and K151. Zn(2+) contacts are provided by E184, H247, and H264.

Belongs to the sugar phosphate cyclases superfamily. Dehydroquinate synthase family. It depends on Co(2+) as a cofactor. Zn(2+) serves as cofactor. NAD(+) is required as a cofactor.

It is found in the cytoplasm. It catalyses the reaction 7-phospho-2-dehydro-3-deoxy-D-arabino-heptonate = 3-dehydroquinate + phosphate. Its pathway is metabolic intermediate biosynthesis; chorismate biosynthesis; chorismate from D-erythrose 4-phosphate and phosphoenolpyruvate: step 2/7. In terms of biological role, catalyzes the conversion of 3-deoxy-D-arabino-heptulosonate 7-phosphate (DAHP) to dehydroquinate (DHQ). The polypeptide is 3-dehydroquinate synthase (Bacillus thuringiensis subsp. konkukian (strain 97-27)).